The chain runs to 160 residues: Na(+)/H(+) antiporter subunit E1 (160 aa).

4 consecutive transmembrane segments (helical) span residues 1–21 (MAIQILVNLILSVFWLFVTGS), 27–47 (FILGYLFALLLVYIMRGVLPG), 49–69 (FYLITVYKIIKLFLVFLIELI), and 101–121 (WQIVLLSNLITLTPGTIVLGI).

Belongs to the CPA3 antiporters (TC 2.A.63) subunit E family. In terms of assembly, may form a heterooligomeric complex that consists of seven subunits: mnhA1, mnhB1, mnhC1, mnhD1, mnhE1, mnhF1 and mnhG1.

It is found in the cell membrane. Mnh complex is a Na(+)/H(+) antiporter involved in Na(+) excretion. This Staphylococcus saprophyticus subsp. saprophyticus (strain ATCC 15305 / DSM 20229 / NCIMB 8711 / NCTC 7292 / S-41) protein is Na(+)/H(+) antiporter subunit E1 (mnhE1).